The following is an 860-amino-acid chain: MQELYRPEEIESTVQQHWHENDTFKVTEDPCKEKYYCLSMLPYPSGRLHMGHVRNYTIGDVIARYQRMLGKNVLQPIGWDAFGLPAEGAAVKNNTAPAPWTYANIDYMKNQLKLLGFGYDWSREVTTCRPDYYRWEQWFFTRLYEKGLVYKKTSAVNWCPQDQTVLANEQVIDGCCWRCDTKVERKEIPQWFVKITAYADQLLYDLDKLESWPEQVKTMQRNWIGRSEGVEITFQVADSEETLTVYTTRPDTFMGTTYVAVAAGHPLSLQAAASNPALADFIQECRTTKVAEADMATMEKKGMATGLHAVHPLTGEMLPVWVANFVLMDYGTGAVMAVPGHDQRDFEFARKYDLPVKPVIRNADGSEPDLSAQAMTEKGVLFNSGEFDGLDFQAGFNAIADALVAQGVGERKVNYRLRDWGVSRQRYWGAPIPMMTLEDGTVVPTPEDQLPVVLPEDVVMDGISSPLKADPDWAKTTYNGQPALRETDTFDTFMESSWYYARYTCPDYDRGMLDPAAANYWLPVDQYIGGIEHAIMHLMYFRFYHKLLRDAGLVTSDEPAKRLLCQGMVLADAFYYLTSSGERVWVSPLEVSVERDEKGRIVKSTDASGRELVYAGMSKMSKSKNNGIDPQEMVEKYGADTVRLFMMFASPAEMTLEWQESGVEGANRFLKRVWKLAYEHPQQGPVGALDIDALNDEQKALRREVHKTIAKVTDDIGRRQTFNTAIAAIMELMNKLARAPQQTGQDRALLQEALVAVVRMLYPFTPHACFTLWRALGGEGDIDNAPWPVADEAAMVEDAKLVVIQVNGKLRGRITVPADADEALVCERASQEHLVAKHLEGTTVRKVIYVPGKLLNLVVG.

The 'HIGH' region signature appears at 42-52 (PYPSGRLHMGH). Positions 619-623 (KMSKS) match the 'KMSKS' region motif. Lys-622 is an ATP binding site.

This sequence belongs to the class-I aminoacyl-tRNA synthetase family.

It is found in the cytoplasm. It carries out the reaction tRNA(Leu) + L-leucine + ATP = L-leucyl-tRNA(Leu) + AMP + diphosphate. The protein is Leucine--tRNA ligase of Sodalis glossinidius (strain morsitans).